Here is a 283-residue protein sequence, read N- to C-terminus: 5'-nucleotidase SurE (283 aa).

Aspartate 14, aspartate 15, serine 47, and asparagine 105 together coordinate a divalent metal cation.

This sequence belongs to the SurE nucleotidase family. A divalent metal cation is required as a cofactor.

It localises to the cytoplasm. It carries out the reaction a ribonucleoside 5'-phosphate + H2O = a ribonucleoside + phosphate. Functionally, nucleotidase that shows phosphatase activity on nucleoside 5'-monophosphates. The chain is 5'-nucleotidase SurE from Chlamydia trachomatis serovar L2 (strain ATCC VR-902B / DSM 19102 / 434/Bu).